We begin with the raw amino-acid sequence, 40 residues long: Alpha-conotoxin GIC (40 aa).

Positions 1-20 are excised as a propeptide; the sequence is SDGRNDAAKAFDLISSTVKK. 2 disulfides stabilise this stretch: Cys22-Cys28 and Cys23-Cys36. Residues 24–26 form a ser-Xaa-Pro motif, crucial for potent interaction with nAChR region; sequence SHP. A Cysteine amide modification is found at Cys36.

Expressed by the venom duct.

Its subcellular location is the secreted. Alpha-conotoxins bind to the nicotinic acetylcholine receptors (nAChR) and inhibit them. This toxin reversibly blocks neuronal nAChRs (alpha-3/beta-2 = alpha-6 or -3/beta-2 or -3 &gt; alpha-3/beta-4 = alpha-4/beta-2). The protein is Alpha-conotoxin GIC of Conus geographus (Geography cone).